We begin with the raw amino-acid sequence, 554 residues long: DNA ligase B (554 aa).

Lys-122 acts as the N6-AMP-lysine intermediate in catalysis.

The protein belongs to the NAD-dependent DNA ligase family. LigB subfamily.

The catalysed reaction is NAD(+) + (deoxyribonucleotide)n-3'-hydroxyl + 5'-phospho-(deoxyribonucleotide)m = (deoxyribonucleotide)n+m + AMP + beta-nicotinamide D-nucleotide.. Catalyzes the formation of phosphodiester linkages between 5'-phosphoryl and 3'-hydroxyl groups in double-stranded DNA using NAD as a coenzyme and as the energy source for the reaction. The polypeptide is DNA ligase B (Pseudomonas fluorescens (strain SBW25)).